The chain runs to 268 residues: MINKINKFFKNNEFSPSKQRGQNFLIDQNIINNVVEAVSKINPSKVLEIGPGLGAISEQLIKRFADNYYAIELDKKLFHHLNERLLKDHILHADALEIDWKSIFDNLGDNPTMVGNLPYNISSKLIKKFILSTYRCAIIMVQKEMGLRLLAKINSKDYSAFSALCQYSLSVSKIIEINETAFIPQPKVRSTLLFLEKKDIAFNEGYEKFLKLIFLSRRKTILNNLKNNYDPKLIIQSLVSLGFKKTSRAQELSPTQLFSLYESLSKLC.

S-adenosyl-L-methionine-binding residues include Asn23, Leu25, Gly50, Glu72, Asp94, and Asn116.

This sequence belongs to the class I-like SAM-binding methyltransferase superfamily. rRNA adenine N(6)-methyltransferase family. RsmA subfamily.

The protein localises to the cytoplasm. It carries out the reaction adenosine(1518)/adenosine(1519) in 16S rRNA + 4 S-adenosyl-L-methionine = N(6)-dimethyladenosine(1518)/N(6)-dimethyladenosine(1519) in 16S rRNA + 4 S-adenosyl-L-homocysteine + 4 H(+). Its function is as follows. Specifically dimethylates two adjacent adenosines (A1518 and A1519) in the loop of a conserved hairpin near the 3'-end of 16S rRNA in the 30S particle. May play a critical role in biogenesis of 30S subunits. This Mycoplasmoides gallisepticum (strain R(low / passage 15 / clone 2)) (Mycoplasma gallisepticum) protein is Ribosomal RNA small subunit methyltransferase A.